The sequence spans 636 residues: 1-deoxy-D-xylulose-5-phosphate synthase (636 aa).

Thiamine diphosphate-binding positions include histidine 74 and 115-117; that span reads GHS. Aspartate 146 lines the Mg(2+) pocket. Thiamine diphosphate is bound by residues 147-148, asparagine 175, tyrosine 286, and glutamate 367; that span reads GA. Asparagine 175 is a Mg(2+) binding site.

It belongs to the transketolase family. DXPS subfamily. In terms of assembly, homodimer. The cofactor is Mg(2+). Thiamine diphosphate is required as a cofactor.

The enzyme catalyses D-glyceraldehyde 3-phosphate + pyruvate + H(+) = 1-deoxy-D-xylulose 5-phosphate + CO2. Its pathway is metabolic intermediate biosynthesis; 1-deoxy-D-xylulose 5-phosphate biosynthesis; 1-deoxy-D-xylulose 5-phosphate from D-glyceraldehyde 3-phosphate and pyruvate: step 1/1. Functionally, catalyzes the acyloin condensation reaction between C atoms 2 and 3 of pyruvate and glyceraldehyde 3-phosphate to yield 1-deoxy-D-xylulose-5-phosphate (DXP). The sequence is that of 1-deoxy-D-xylulose-5-phosphate synthase from Halothermothrix orenii (strain H 168 / OCM 544 / DSM 9562).